Here is a 538-residue protein sequence, read N- to C-terminus: Ribosome-associated complex subunit SSZ1 (538 aa).

Positions 400–538 are peptide-binding domain; it reads PVIVNTPHLK…KTGNAVKGEL (139 aa). The segment at 464–484 is disordered; sequence PIPKEENAEEDDESEWSDDEP. Over residues 470 to 484 the composition is skewed to acidic residues; sequence NAEEDDESEWSDDEP. Phosphoserine is present on residues S477 and S480.

Belongs to the heat shock protein 70 family. RAC is a heterodimer of the Hsp70/DnaK-type chaperone SSZ1 and the Hsp40/DnaJ-type chaperone ZUO1. RAC associates with ribosomes via ZUO1.

The protein localises to the cytoplasm. Its function is as follows. Component of the ribosome-associated complex (RAC), a heterodimeric chaperone complex involved in regulation of accurate translation termination and in folding or maintaining nascent polypeptides in a folding-competent state. RAC stimulates the ATPase activity of the ribosome-associated pool of Hsp70-type chaperones SSB1/SSB2 that bind to the nascent polypeptide chain. SSZ1 is required for ZUO1 to function efficiently as a J-protein for SSB1/SSB2. Also involved in pleiotropic drug resistance by post-translational activation of transcription factor PDR1. This is Ribosome-associated complex subunit SSZ1 (SSZ1) from Saccharomyces cerevisiae (strain ATCC 204508 / S288c) (Baker's yeast).